Reading from the N-terminus, the 417-residue chain is Equilibrative nucleotide transporter 2 (417 aa).

Transmembrane regions (helical) follow at residues 20 to 40, 52 to 72, 85 to 105, 109 to 129, 144 to 164, 185 to 205, 265 to 285, 292 to 312, 328 to 348, 354 to 374, and 393 to 413; these read AVCW…LTIV, PSRI…SVLV, LFGY…NLAT, GGIG…LADA, PEFL…TSGL, LFFA…AYVF, LAVT…GFLS, SLGD…DLVG, CLLI…ITGI, WMIF…VCVI, and LVLY…LWLV.

The protein belongs to the SLC29A/ENT transporter (TC 2.A.57) family. In terms of tissue distribution, expressed in leaves and flowers.

It is found in the cell membrane. May be involved in nucleoside transport. This Arabidopsis thaliana (Mouse-ear cress) protein is Equilibrative nucleotide transporter 2 (ENT2).